Consider the following 137-residue polypeptide: uncharacterized protein (137 aa).

Residues 5–136 (NRHLIHQINQ…FSHLFRMFLQ (132 aa)) form the HTH marR-type domain. Residues 51 to 74 (QKEIWSYLNVEAPTVTRTIKRLEE) constitute a DNA-binding region (H-T-H motif).

This is an uncharacterized protein from Bacillus subtilis (strain 168).